Here is a 336-residue protein sequence, read N- to C-terminus: DNA-directed RNA polymerase subunit alpha (336 aa).

Residues Met1 to Asp232 form an alpha N-terminal domain (alpha-NTD) region. The alpha C-terminal domain (alpha-CTD) stretch occupies residues Phe248–Tyr336.

The protein belongs to the RNA polymerase alpha chain family. As to quaternary structure, homodimer. The RNAP catalytic core consists of 2 alpha, 1 beta, 1 beta' and 1 omega subunit. When a sigma factor is associated with the core the holoenzyme is formed, which can initiate transcription.

It carries out the reaction RNA(n) + a ribonucleoside 5'-triphosphate = RNA(n+1) + diphosphate. Functionally, DNA-dependent RNA polymerase catalyzes the transcription of DNA into RNA using the four ribonucleoside triphosphates as substrates. In Sinorhizobium fredii (strain NBRC 101917 / NGR234), this protein is DNA-directed RNA polymerase subunit alpha.